Consider the following 433-residue polypeptide: MTATWEKKEGNEGLLTVTVPAEKVNKALDQAFKKVVKQINVPGFRKGKVPRPIFEQRFGVEALYQDAIDILLPDAYGEAIDETDIKPVAQPEVSVTQIEKGKDFIFEATVTVEPEVKLGDYKGLEIEKQETELSDDELQEAIDHSLGHLAEMVVKEDGVVENGDTVNIDFSGSVDGEEFEGGQAEGYDLEIGSGSFIPGFEEQLEGMKVDEEKDVVVTFPEEYHAEELAGKEATFKTKVNEIKFKEVPELTDEIANELDAEANTVDEYKENLRKRLAEQKATDAENVEKEEAITKATDNTTIDIPEAMINTELDRMVSEFAQRIQQQGLDLQTYFQISGQDETQLREQMKDDAEQRVKTNLTLTAIAEAEKIEATDEDIDKELEKMSKQFNISVEDIKNTLGNTDIIKNDVRIQKVIDLLRDNAKFVEGTKED.

The 86-residue stretch at 163–248 (GDTVNIDFSG…VNEIKFKEVP (86 aa)) folds into the PPIase FKBP-type domain.

The protein belongs to the FKBP-type PPIase family. Tig subfamily.

The protein resides in the cytoplasm. It catalyses the reaction [protein]-peptidylproline (omega=180) = [protein]-peptidylproline (omega=0). Involved in protein export. Acts as a chaperone by maintaining the newly synthesized protein in an open conformation. Functions as a peptidyl-prolyl cis-trans isomerase. The protein is Trigger factor of Staphylococcus aureus (strain Newman).